Reading from the N-terminus, the 406-residue chain is Tyrosine--tRNA ligase (406 aa).

Tyr-35 provides a ligand contact to L-tyrosine. Residues Pro-40–His-49 carry the 'HIGH' region motif. Residues Tyr-168 and Gln-172 each contribute to the L-tyrosine site. The short motif at Lys-228–Thr-232 is the 'KMSKS' region element. Lys-231 provides a ligand contact to ATP. The S4 RNA-binding domain occupies Ser-340–Ile-405.

It belongs to the class-I aminoacyl-tRNA synthetase family. TyrS type 1 subfamily. As to quaternary structure, homodimer.

It localises to the cytoplasm. It carries out the reaction tRNA(Tyr) + L-tyrosine + ATP = L-tyrosyl-tRNA(Tyr) + AMP + diphosphate + H(+). Catalyzes the attachment of tyrosine to tRNA(Tyr) in a two-step reaction: tyrosine is first activated by ATP to form Tyr-AMP and then transferred to the acceptor end of tRNA(Tyr). The polypeptide is Tyrosine--tRNA ligase (Clostridium botulinum (strain Eklund 17B / Type B)).